The sequence spans 484 residues: Chromosomal replication initiator protein DnaA (484 aa).

A domain I, interacts with DnaA modulators region spans residues 1–73 (MQEGKNIWSL…EILTEKGHNT (73 aa)). Residues 73 to 140 (TINVEFINPP…EDIHTKYRNP (68 aa)) are domain II. Positions 141–357 (FLKKKYTFEN…AAVTKLKAHI (217 aa)) are domain III, AAA+ region. ATP-binding residues include G185, G187, K188, and T189. The domain IV, binds dsDNA stretch occupies residues 358–484 (DLEDIEIDTS…IELMNKINKN (127 aa)).

This sequence belongs to the DnaA family. Oligomerizes as a right-handed, spiral filament on DNA at oriC.

It is found in the cytoplasm. Plays an essential role in the initiation and regulation of chromosomal replication. ATP-DnaA binds to the origin of replication (oriC) to initiate formation of the DNA replication initiation complex once per cell cycle. Binds the DnaA box (a 9 base pair repeat at the origin) and separates the double-stranded (ds)DNA. Forms a right-handed helical filament on oriC DNA; dsDNA binds to the exterior of the filament while single-stranded (ss)DNA is stabiized in the filament's interior. The ATP-DnaA-oriC complex binds and stabilizes one strand of the AT-rich DNA unwinding element (DUE), permitting loading of DNA polymerase. After initiation quickly degrades to an ADP-DnaA complex that is not apt for DNA replication. Binds acidic phospholipids. This chain is Chromosomal replication initiator protein DnaA, found in Borrelia turicatae (strain 91E135).